The chain runs to 305 residues: Spermatogenesis-associated protein 4 (305 aa).

The 107-residue stretch at 49-155 (SRLSRSVLRW…EEVYTLLTHR (107 aa)) folds into the Calponin-homology (CH) domain.

The protein localises to the nucleus. Functionally, may play a role in apoptosis regulation. This Pan troglodytes (Chimpanzee) protein is Spermatogenesis-associated protein 4 (SPATA4).